The primary structure comprises 685 residues: Protein arginine N-methyltransferase 7 (685 aa).

2 SAM-dependent MTase PRMT-type domains span residues 14–355 (QATW…YSLW) and 364–685 (AESI…LKSI).

This sequence belongs to the class I-like SAM-binding methyltransferase superfamily. Protein arginine N-methyltransferase family. PRMT7 subfamily.

Its function is as follows. Essential arginine methyltransferase that can both catalyze the formation of omega-N monomethylarginine (MMA) and symmetrical dimethylarginine (sDMA). Specifically mediates the symmetrical dimethylation of arginine residues in the small nuclear ribonucleoproteins SmD1 and SmD3. This Drosophila willistoni (Fruit fly) protein is Protein arginine N-methyltransferase 7 (Art7).